Here is a 596-residue protein sequence, read N- to C-terminus: UDP-glucuronate:xylan alpha-glucuronosyltransferase 2 (596 aa).

A helical; Signal-anchor for type II membrane protein transmembrane segment spans residues 17–37 (LIRFNLVLLGFSFLLYTAIFF). Mn(2+) contacts are provided by Asp395 and Asp397. Substrate is bound by residues 395-397 (DAD), 424-426 (NSG), 451-455 (NGGDQ), and 504-509 (HYLGWK). His504 contributes to the Mn(2+) binding site.

This sequence belongs to the glycosyltransferase 8 family. Glycogenin subfamily. It depends on Mn(2+) as a cofactor.

It is found in the golgi apparatus membrane. In terms of biological role, glycosyltransferase required for the addition of both glucuronic acid and 4-O-methylglucuronic acid branches to xylan in stem cell walls. In association with GUX1, is responsible for almost all of the substitutions of the xylan backbone in stem glucuronoxylan. The polypeptide is UDP-glucuronate:xylan alpha-glucuronosyltransferase 2 (GUX2) (Arabidopsis thaliana (Mouse-ear cress)).